The primary structure comprises 292 residues: ATP synthase gamma chain (292 aa).

The protein belongs to the ATPase gamma chain family. F-type ATPases have 2 components, CF(1) - the catalytic core - and CF(0) - the membrane proton channel. CF(1) has five subunits: alpha(3), beta(3), gamma(1), delta(1), epsilon(1). CF(0) has three main subunits: a, b and c.

The protein resides in the cell inner membrane. Its function is as follows. Produces ATP from ADP in the presence of a proton gradient across the membrane. The gamma chain is believed to be important in regulating ATPase activity and the flow of protons through the CF(0) complex. In Magnetococcus marinus (strain ATCC BAA-1437 / JCM 17883 / MC-1), this protein is ATP synthase gamma chain.